We begin with the raw amino-acid sequence, 286 residues long: Bifunctional protein FolD (286 aa).

NADP(+) is bound by residues 167 to 169 (GRS) and Ile-233.

Belongs to the tetrahydrofolate dehydrogenase/cyclohydrolase family. In terms of assembly, homodimer.

It catalyses the reaction (6R)-5,10-methylene-5,6,7,8-tetrahydrofolate + NADP(+) = (6R)-5,10-methenyltetrahydrofolate + NADPH. The enzyme catalyses (6R)-5,10-methenyltetrahydrofolate + H2O = (6R)-10-formyltetrahydrofolate + H(+). Its pathway is one-carbon metabolism; tetrahydrofolate interconversion. In terms of biological role, catalyzes the oxidation of 5,10-methylenetetrahydrofolate to 5,10-methenyltetrahydrofolate and then the hydrolysis of 5,10-methenyltetrahydrofolate to 10-formyltetrahydrofolate. The polypeptide is Bifunctional protein FolD (Limosilactobacillus reuteri (strain DSM 20016) (Lactobacillus reuteri)).